The sequence spans 318 residues: HTH-type transcriptional regulatory protein TyrR (318 aa).

One can recognise a Sigma-54 factor interaction; truncated domain in the interval Phe-15 to Ser-239. ATP is bound by residues Gly-43–Asp-50 and Ala-101–Gly-110. A DNA-binding region (H-T-H motif) is located at residues Ser-292–Lys-312.

Homodimer. In presence of tyrosine (or high concentrations of phenylalanine or tryptophan) and ATP, it self-associates to form a hexamer.

The protein resides in the cytoplasm. With respect to regulation, the DNA binding ability is drastically reduced in the presence of ATP. Tyrosine further reduces the binding affinity of TyrR in the presence of ATP. Functionally, transcriptional regulator of the TyrR regulon, which includes a number of genes coding for proteins involved in the biosynthesis or transport of the three aromatic amino acids, phenylalanine, tyrosine and tryptophan. These three aromatic amino acids act as effectors which bind to the TyrR protein to form an active regulatory protein. Acts by binding specifically to TyrR boxes in the promoter region of the target genes. Can efficiently repress the transcription of the aroF promoter, but lacks the ability to function as a transcriptional activator. This Haemophilus influenzae (strain ATCC 51907 / DSM 11121 / KW20 / Rd) protein is HTH-type transcriptional regulatory protein TyrR.